Consider the following 212-residue polypeptide: Pyrrolidone-carboxylate peptidase (212 aa).

Residues E78, C141, and H165 contribute to the active site.

This sequence belongs to the peptidase C15 family. As to quaternary structure, homotetramer.

It localises to the cytoplasm. The enzyme catalyses Release of an N-terminal pyroglutamyl group from a polypeptide, the second amino acid generally not being Pro.. Removes 5-oxoproline from various penultimate amino acid residues except L-proline. The chain is Pyrrolidone-carboxylate peptidase from Staphylococcus aureus (strain bovine RF122 / ET3-1).